The chain runs to 97 residues: Large ribosomal subunit protein uL23 (97 aa).

The protein belongs to the universal ribosomal protein uL23 family. As to quaternary structure, part of the 50S ribosomal subunit. Contacts protein L29, and trigger factor when it is bound to the ribosome.

Functionally, one of the early assembly proteins it binds 23S rRNA. One of the proteins that surrounds the polypeptide exit tunnel on the outside of the ribosome. Forms the main docking site for trigger factor binding to the ribosome. The sequence is that of Large ribosomal subunit protein uL23 from Agrobacterium fabrum (strain C58 / ATCC 33970) (Agrobacterium tumefaciens (strain C58)).